Consider the following 115-residue polypeptide: Glutaredoxin 4 (115 aa).

The region spanning 5–107 (IEKIQRQIAE…QLIKETAAKY (103 aa)) is the Glutaredoxin domain. Lysine 22 is a glutathione binding site. Cysteine 30 serves as a coordination point for [2Fe-2S] cluster. Glutathione-binding positions include arginine 59, phenylalanine 71, and 84-85 (CD).

It belongs to the glutaredoxin family. Monothiol subfamily. In terms of assembly, homodimer.

The protein localises to the cytoplasm. Its function is as follows. Monothiol glutaredoxin involved in the biogenesis of iron-sulfur clusters. In Shigella flexneri, this protein is Glutaredoxin 4 (grxD).